We begin with the raw amino-acid sequence, 98 residues long: Large ribosomal subunit protein uL23 (98 aa).

The protein belongs to the universal ribosomal protein uL23 family. As to quaternary structure, part of the 50S ribosomal subunit. Contacts protein L29, and trigger factor when it is bound to the ribosome.

Its function is as follows. One of the early assembly proteins it binds 23S rRNA. One of the proteins that surrounds the polypeptide exit tunnel on the outside of the ribosome. Forms the main docking site for trigger factor binding to the ribosome. The protein is Large ribosomal subunit protein uL23 of Rickettsia felis (strain ATCC VR-1525 / URRWXCal2) (Rickettsia azadi).